A 165-amino-acid polypeptide reads, in one-letter code: E3 ubiquitin-protein ligase RNF181 (165 aa).

An RING-type; atypical zinc finger spans residues 88–129 (CPVCLLEFEEEETVIEMPCHHLFHSNCILPWLSKTNSCPLCR). Positions 136-165 (DDSYEEHKKDKARRQQQQHRLENLHGAMYT) are disordered. A Phosphothreonine modification is found at T165.

It belongs to the RNF181 family. In terms of assembly, directly interacts with ITGA2B and, as a result, with integrin ITGA2B/ITGB3. There is no evidence that integrin ITGA2B/ITGB3 is an endogenous substrate for RNF181-directed ubiquitination. Auto-ubiquitinated as part of the enzymatic reaction.

The catalysed reaction is S-ubiquitinyl-[E2 ubiquitin-conjugating enzyme]-L-cysteine + [acceptor protein]-L-lysine = [E2 ubiquitin-conjugating enzyme]-L-cysteine + N(6)-ubiquitinyl-[acceptor protein]-L-lysine.. It participates in protein modification; protein ubiquitination. In terms of biological role, E3 ubiquitin-protein ligase which accepts ubiquitin from an E2 ubiquitin-conjugating enzyme in the form of a thioester and then directly transfers the ubiquitin to targeted substrates. Catalyzes monoubiquitination of 26S proteasome subunit PSMC2/RPT1. This chain is E3 ubiquitin-protein ligase RNF181 (Rnf181), found in Rattus norvegicus (Rat).